A 1118-amino-acid polypeptide reads, in one-letter code: Error-prone DNA polymerase (1118 aa).

The disordered stretch occupies residues 1071-1118 (GPQPMGYAKEVGSDRRSRPEIGNAPARQDLATLSEEAEQVMPKGRNFQ).

This sequence belongs to the DNA polymerase type-C family. DnaE2 subfamily.

The protein localises to the cytoplasm. It catalyses the reaction DNA(n) + a 2'-deoxyribonucleoside 5'-triphosphate = DNA(n+1) + diphosphate. Functionally, DNA polymerase involved in damage-induced mutagenesis and translesion synthesis (TLS). It is not the major replicative DNA polymerase. The sequence is that of Error-prone DNA polymerase from Mesorhizobium japonicum (strain LMG 29417 / CECT 9101 / MAFF 303099) (Mesorhizobium loti (strain MAFF 303099)).